A 141-amino-acid polypeptide reads, in one-letter code: Large ribosomal subunit protein uL11 (141 aa).

The protein belongs to the universal ribosomal protein uL11 family. In terms of assembly, part of the ribosomal stalk of the 50S ribosomal subunit. Interacts with L10 and the large rRNA to form the base of the stalk. L10 forms an elongated spine to which L12 dimers bind in a sequential fashion forming a multimeric L10(L12)X complex. One or more lysine residues are methylated.

Functionally, forms part of the ribosomal stalk which helps the ribosome interact with GTP-bound translation factors. In Chlorobium phaeovibrioides (strain DSM 265 / 1930) (Prosthecochloris vibrioformis (strain DSM 265)), this protein is Large ribosomal subunit protein uL11.